A 130-amino-acid polypeptide reads, in one-letter code: Small ribosomal subunit protein uS9 (130 aa).

This sequence belongs to the universal ribosomal protein uS9 family.

This is Small ribosomal subunit protein uS9 from Lawsonia intracellularis (strain PHE/MN1-00).